The primary structure comprises 412 residues: Peptidase T (412 aa).

Histidine 84 provides a ligand contact to Zn(2+). The active site involves aspartate 86. Aspartate 146 is a binding site for Zn(2+). Glutamate 179 serves as the catalytic Proton acceptor. Zn(2+) contacts are provided by glutamate 180, aspartate 202, and histidine 385.

This sequence belongs to the peptidase M20B family. Zn(2+) is required as a cofactor.

The protein localises to the cytoplasm. It catalyses the reaction Release of the N-terminal residue from a tripeptide.. Functionally, cleaves the N-terminal amino acid of tripeptides. The chain is Peptidase T from Haemophilus influenzae (strain PittGG).